The sequence spans 493 residues: GPI alpha-1,6-mannosyltransferase 2 (493 aa).

Topologically, residues 1–13 (MGLLDPSQKEVLR) are cytoplasmic. The helical transmembrane segment at 14–34 (FAVNCRILTLVLQALFNLIIP) threads the bilayer. The Lumenal segment spans residues 35-77 (DHHADAFCPPRLAPSGSADQLVEGLLGGLSRWDAEHFLFIAEH). The helical transmembrane segment at 78-98 (GYLYEHNFAFFPGFPLALLMG) threads the bilayer. At 99–113 (TELLRPLQGLLSQRS) the chain is on the cytoplasmic side. Residues 114–134 (CLLVSVALLNLLFSVLAAVAL) form a helical membrane-spanning segment. Over 135–136 (HD) the chain is Lumenal. Residues 137 to 157 (LGCLVLHCPRQALCAALLFCI) form a helical membrane-spanning segment. Topologically, residues 158 to 161 (SPAN) are cytoplasmic. A helical transmembrane segment spans residues 162-182 (VFLAAGYSEALFAFLTFSAMG). At 183-192 (QLERGRGWAS) the chain is on the lumenal side. Residues 193 to 213 (GLLFALAAGVRSNGLVSLGFL) form a helical membrane-spanning segment. At 214-234 (LHSQCRGFCSSLAVLSPWKPL) the chain is on the cytoplasmic side. Residues 235–255 (VKLMASVCLSVLIVSLPFALF) traverse the membrane as a helical segment. The Lumenal segment spans residues 256–327 (QYRAYIQFCS…RYYELKQVPN (72 aa)). Residues 328-348 (FLLATPVTVLVVWATWTYVTT) form a helical membrane-spanning segment. Residues 349-378 (HPWLCLTLGLQRTKDRENPEKPHRGFLSPK) are Cytoplasmic-facing. Residues 379–399 (VFVYLVHAAALLVFGGLCMHV) traverse the membrane as a helical segment. Over 400–469 (QVLTRFLASS…DWKRCSPVTR (70 aa)) the chain is Lumenal. The helical transmembrane segment at 470–490 (CVLVYFLTYWLLGLILHCNFL) threads the bilayer. Residues 491-493 (PWT) lie on the Cytoplasmic side of the membrane.

It belongs to the PIGV family. Not N-glycosylated.

It is found in the endoplasmic reticulum membrane. The protein operates within glycolipid biosynthesis; glycosylphosphatidylinositol-anchor biosynthesis. Functionally, alpha-1,6-mannosyltransferase that catalyzes the transfer of the second mannose, via an alpha-1,6 bond, from a dolichol-phosphate-mannose (Dol-P-Man) to the alpha-D-Man-(1-&gt;4)-alpha-D-GlcN-(1-&gt;6)-(1-radyl,2-acyl-sn-glycero-3-phospho)-2-acyl-inositol (also termed H2) intermediate to generate an alpha-D-Man-(1-&gt;6)-alpha-D-Man-(1-&gt;4)-alpha-D-GlcN-(1-&gt;6)-(1-radyl,2-acyl-sn-glycero-3-phospho)-2-acyl-inositol (also termed H3) and participates in the seventh step of the glycosylphosphatidylinositol-anchor biosynthesis. Also transfers the second mannose on a 2-PEtn-alpha-D-Man-(1-&gt;4)-alpha-D-GlcN-(1-&gt;6)-(1-radyl,2-acyl-sn-glycero-3-phospho)-2-acyl-inositol (also termed H5). The sequence is that of GPI alpha-1,6-mannosyltransferase 2 from Mus musculus (Mouse).